A 322-amino-acid chain; its full sequence is DNA primase small subunit PriS (322 aa).

Catalysis depends on residues Asp-100, Asp-102, and Asp-228.

It belongs to the eukaryotic-type primase small subunit family. In terms of assembly, heterodimer of a small subunit (PriS) and a large subunit (PriL). Mg(2+) serves as cofactor. Mn(2+) is required as a cofactor.

Its function is as follows. Catalytic subunit of DNA primase, an RNA polymerase that catalyzes the synthesis of short RNA molecules used as primers for DNA polymerase during DNA replication. The small subunit contains the primase catalytic core and has DNA synthesis activity on its own. Binding to the large subunit stabilizes and modulates the activity, increasing the rate of DNA synthesis while decreasing the length of the DNA fragments, and conferring RNA synthesis capability. The DNA polymerase activity may enable DNA primase to also catalyze primer extension after primer synthesis. May also play a role in DNA repair. In Sulfolobus acidocaldarius (strain ATCC 33909 / DSM 639 / JCM 8929 / NBRC 15157 / NCIMB 11770), this protein is DNA primase small subunit PriS.